Here is a 572-residue protein sequence, read N- to C-terminus: Urease subunit alpha (572 aa).

A Urease domain is found at 136–572; sequence GGIDTHIHWI…VPLAQRYFLF (437 aa). The Ni(2+) site is built by H141, H143, and K224. The residue at position 224 (K224) is an N6-carboxylysine. Residue H226 coordinates substrate. The Ni(2+) site is built by H253 and H279. The Proton donor role is filled by H327. D367 is a Ni(2+) binding site.

It belongs to the metallo-dependent hydrolases superfamily. Urease alpha subunit family. In terms of assembly, heterotrimer of UreA (gamma), UreB (beta) and UreC (alpha) subunits. Three heterotrimers associate to form the active enzyme. The cofactor is Ni cation. Carboxylation allows a single lysine to coordinate two nickel ions.

It is found in the cytoplasm. It catalyses the reaction urea + 2 H2O + H(+) = hydrogencarbonate + 2 NH4(+). The protein operates within nitrogen metabolism; urea degradation; CO(2) and NH(3) from urea (urease route): step 1/1. The polypeptide is Urease subunit alpha (Actinobacillus pleuropneumoniae serotype 7 (strain AP76)).